The sequence spans 250 residues: DNA repair protein RecO (250 aa).

It belongs to the RecO family.

Involved in DNA repair and RecF pathway recombination. The chain is DNA repair protein RecO from Staphylococcus aureus (strain COL).